Here is a 231-residue protein sequence, read N- to C-terminus: Chromosome partition protein MukE (231 aa).

A disordered region spans residues 211–231 (SLLADEEEQDYNEQAELEGEA). Residues 214–231 (ADEEEQDYNEQAELEGEA) are compositionally biased toward acidic residues.

This sequence belongs to the MukE family. As to quaternary structure, interacts, and probably forms a ternary complex, with MukF and MukB. The complex formation is stimulated by calcium or magnesium.

It is found in the cytoplasm. The protein localises to the nucleoid. Its function is as follows. Involved in chromosome condensation, segregation and cell cycle progression. May participate in facilitating chromosome segregation by condensation DNA from both sides of a centrally located replisome during cell division. Probably acts via its interaction with MukB and MukF. This Vibrio vulnificus (strain CMCP6) protein is Chromosome partition protein MukE.